The following is a 416-amino-acid chain: Serine hydroxymethyltransferase (416 aa).

Residues Leu117 and 121-123 contribute to the (6S)-5,6,7,8-tetrahydrofolate site; that span reads GHL. Lys226 is modified (N6-(pyridoxal phosphate)lysine). Glu242 is a (6S)-5,6,7,8-tetrahydrofolate binding site.

Belongs to the SHMT family. In terms of assembly, homodimer. Pyridoxal 5'-phosphate serves as cofactor.

Its subcellular location is the cytoplasm. It catalyses the reaction (6R)-5,10-methylene-5,6,7,8-tetrahydrofolate + glycine + H2O = (6S)-5,6,7,8-tetrahydrofolate + L-serine. The protein operates within one-carbon metabolism; tetrahydrofolate interconversion. It functions in the pathway amino-acid biosynthesis; glycine biosynthesis; glycine from L-serine: step 1/1. In terms of biological role, catalyzes the reversible interconversion of serine and glycine with tetrahydrofolate (THF) serving as the one-carbon carrier. This reaction serves as the major source of one-carbon groups required for the biosynthesis of purines, thymidylate, methionine, and other important biomolecules. Also exhibits THF-independent aldolase activity toward beta-hydroxyamino acids, producing glycine and aldehydes, via a retro-aldol mechanism. The chain is Serine hydroxymethyltransferase from Endomicrobium trichonymphae.